A 124-amino-acid polypeptide reads, in one-letter code: Fluoride-specific ion channel FluC (124 aa).

4 helical membrane-spanning segments follow: residues 5 to 25 (LVVF…NLAA), 36 to 56 (TMII…WFAV), 70 to 90 (TGIL…FLLM), and 100 to 120 (LYVL…LAVI). 2 residues coordinate Na(+): Gly-74 and Thr-77.

This sequence belongs to the fluoride channel Fluc/FEX (TC 1.A.43) family.

It localises to the cell inner membrane. It catalyses the reaction fluoride(in) = fluoride(out). With respect to regulation, na(+) is not transported, but it plays an essential structural role and its presence is essential for fluoride channel function. Its function is as follows. Fluoride-specific ion channel. Important for reducing fluoride concentration in the cell, thus reducing its toxicity. In Methylobacterium nodulans (strain LMG 21967 / CNCM I-2342 / ORS 2060), this protein is Fluoride-specific ion channel FluC.